Reading from the N-terminus, the 141-residue chain is MLQSLNHLTLAVSDLQKSVTFWHELLGLTLHARWNTGAYLTCGDLWVCLSYDEARQYVPPQESDYTHYAFTVAEEDFEPLSQRLEQAGVTIWKQNKSEGASFYFLDPDGHKLELHVGSLAARLAACREKPYAGMVFTSDEA.

Positions 4–117 (SLNHLTLAVS…DGHKLELHVG (114 aa)) constitute a VOC domain. His7, His67, and Glu113 together coordinate Mn(2+).

It belongs to the fosfomycin resistance protein family. In terms of assembly, homodimer. The cofactor is Mn(2+).

It localises to the cytoplasm. It carries out the reaction RX + glutathione = an S-substituted glutathione + a halide anion + H(+). With respect to regulation, requires the monovalent cation K(+) for optimal activity. Metalloglutathione transferase which confers resistance to fosfomycin by catalyzing the addition of glutathione to fosfomycin. The chain is Glutathione transferase FosA (fosA) from Serratia marcescens.